The primary structure comprises 383 residues: MKLSDFDFNLPSALIAQYPSSERDNSDLLIAGTKHIKTKFYNIIDYLKKGDLLVFNNSKVIKAKLHLGKNITINLNKKLSDNCWIAFAKPARKLNIGDEFYFDTHKIIITEKLAIGEIKVKFMLDNISIIKFLDKYGEIPLPFYIKRPSPVCYSNMALCCKPENTLKIKSIPHNMSKIVTNNSNTVNLRSNDGIIDSTNDNDRYQTIYSQIEGSVAAPTAGLHFTKNILDKLKTKGVHTAFVTLHVGAGTFLPVKTENIHEHKMHTEYCSITTETAEIINKTKQEGRSIIAVGTTTLRTIESACNNGIVRAGNFETDIFITPGFNFQVVDMLLTNFHFPKSTLFILICAFAGFKEMHALYKYAIKEKMRFFSYGDATLLYRKV.

This sequence belongs to the QueA family. In terms of assembly, monomer.

It localises to the cytoplasm. It carries out the reaction 7-aminomethyl-7-carbaguanosine(34) in tRNA + S-adenosyl-L-methionine = epoxyqueuosine(34) in tRNA + adenine + L-methionine + 2 H(+). It participates in tRNA modification; tRNA-queuosine biosynthesis. Functionally, transfers and isomerizes the ribose moiety from AdoMet to the 7-aminomethyl group of 7-deazaguanine (preQ1-tRNA) to give epoxyqueuosine (oQ-tRNA). The polypeptide is S-adenosylmethionine:tRNA ribosyltransferase-isomerase (Rickettsia prowazekii (strain Madrid E)).